A 715-amino-acid chain; its full sequence is MIYEGKAITVKALESGIVELNFDLKGESVNKFNRLTLNELRQAVDTIKADASIKGVIVSSGKDVFIVGADITEFVDNFKLPDAELVAGNLEANKIFSDFEDLNVPTVAAINGIALGGGLEMCLAADYRVMAASAKIGLPEVKLGIYPGFGGTVRLPRLIGADNAIEWIAAGKENRAEDALKVGAVDAVVAPDKLKDAALALVKRAISGEFDYKAKRQPKLEKLKLNAIEQMMAFETAKGFVAGQAGPNYPAPVEAIKTIQKAANFGRDKALEVEAAGFVKLAKTSAAQSLIGLFLNDQELKKKAKAYDEIAKDVKQAAVLGAGIMGGGIAYQSASKGTPILMKDINEHGIEQGLAEAAKLLVGRVDKGRMTAAKMAEVLNGIRPTLSYGDFGNVDLVVEAVVENPKVKQIVLAEVEGQVKEDTILASNTSTISISLLAKALKRPENFVGMHFFNPVHMMPLVEVIRGEKSSELAVATTVAYAKKMGKNPIVVNDCPGFLVNRVLFPYFGGFAKLVSAGVDFVRIDKIMEKFGWPMGPAYLMDVVGIDTGHHGRDVMAEGFPDRMKDDRRSAVDVLYEAKRLGQKNGKGFYAYETDKKGKQKKVADPSVLEVLKPIVYEQREVTDEDIINWMMIPLCLETVRCLEDGIVETAAEADMGLVYGIGFPPFRGGALRYIDSIGVAEFVALADQYADLGALYHPTAKLREMAKNGQSFFG.

The enoyl-CoA hydratase/isomerase stretch occupies residues 1 to 190; that stretch reads MIYEGKAITV…KVGAVDAVVA (190 aa). Aspartate 297 provides a ligand contact to substrate. Residues 312–715 are 3-hydroxyacyl-CoA dehydrogenase; that stretch reads KDVKQAAVLG…MAKNGQSFFG (404 aa). Residues methionine 325, aspartate 344, 401–403, lysine 408, and serine 430 contribute to the NAD(+) site; that span reads VVE. Histidine 451 functions as the For 3-hydroxyacyl-CoA dehydrogenase activity in the catalytic mechanism. Asparagine 454 lines the NAD(+) pocket. Substrate is bound by residues asparagine 501 and tyrosine 660.

The protein in the N-terminal section; belongs to the enoyl-CoA hydratase/isomerase family. In the C-terminal section; belongs to the 3-hydroxyacyl-CoA dehydrogenase family. Heterotetramer of two alpha chains (FadB) and two beta chains (FadA).

It catalyses the reaction a (3S)-3-hydroxyacyl-CoA + NAD(+) = a 3-oxoacyl-CoA + NADH + H(+). The catalysed reaction is a (3S)-3-hydroxyacyl-CoA = a (2E)-enoyl-CoA + H2O. The enzyme catalyses a 4-saturated-(3S)-3-hydroxyacyl-CoA = a (3E)-enoyl-CoA + H2O. It carries out the reaction (3S)-3-hydroxybutanoyl-CoA = (3R)-3-hydroxybutanoyl-CoA. It catalyses the reaction a (3Z)-enoyl-CoA = a 4-saturated (2E)-enoyl-CoA. The catalysed reaction is a (3E)-enoyl-CoA = a 4-saturated (2E)-enoyl-CoA. The protein operates within lipid metabolism; fatty acid beta-oxidation. Its function is as follows. Involved in the aerobic and anaerobic degradation of long-chain fatty acids via beta-oxidation cycle. Catalyzes the formation of 3-oxoacyl-CoA from enoyl-CoA via L-3-hydroxyacyl-CoA. It can also use D-3-hydroxyacyl-CoA and cis-3-enoyl-CoA as substrate. The sequence is that of Fatty acid oxidation complex subunit alpha from Pseudomonas fluorescens (strain ATCC BAA-477 / NRRL B-23932 / Pf-5).